The following is a 177-amino-acid chain: Ribulose bisphosphate carboxylase small subunit, chloroplastic 6 (177 aa).

Residues 1-56 (MASSMMASTAAVARVGPAQTNMVAPFNGLRSSVAFPATRKANNDLSTLPSNGGRVS) constitute a chloroplast transit peptide.

Belongs to the RuBisCO small chain family. Heterohexadecamer of 8 large and 8 small subunits.

The protein resides in the plastid. Its subcellular location is the chloroplast. Functionally, ruBisCO catalyzes two reactions: the carboxylation of D-ribulose 1,5-bisphosphate, the primary event in carbon dioxide fixation, as well as the oxidative fragmentation of the pentose substrate. Both reactions occur simultaneously and in competition at the same active site. Although the small subunit is not catalytic it is essential for maximal activity. The chain is Ribulose bisphosphate carboxylase small subunit, chloroplastic 6 from Lemna gibba (Swollen duckweed).